A 75-amino-acid chain; its full sequence is U6-lycotoxin-Ls1g (75 aa).

The signal sequence occupies residues 1–21 (MKLLLFTALVLVVISLIEVEA). Positions 22-25 (ENER) are excised as a propeptide.

This sequence belongs to the neurotoxin 19 (CSTX) family. 06 (U6-Lctx) subfamily. In terms of processing, contains 4 disulfide bonds. In terms of tissue distribution, expressed by the venom gland.

It is found in the secreted. This is U6-lycotoxin-Ls1g from Lycosa singoriensis (Wolf spider).